Reading from the N-terminus, the 323-residue chain is Fructose-1,6-bisphosphatase class 1 (323 aa).

4 residues coordinate Mg(2+): Glu-88, Asp-107, Leu-109, and Asp-110. Substrate is bound by residues 110–113 (DGSS) and Asn-200. Position 272 (Glu-272) interacts with Mg(2+).

Belongs to the FBPase class 1 family. As to quaternary structure, homotetramer. Mg(2+) is required as a cofactor.

It localises to the cytoplasm. It carries out the reaction beta-D-fructose 1,6-bisphosphate + H2O = beta-D-fructose 6-phosphate + phosphate. The protein operates within carbohydrate biosynthesis; gluconeogenesis. This Acinetobacter baylyi (strain ATCC 33305 / BD413 / ADP1) protein is Fructose-1,6-bisphosphatase class 1.